The following is a 345-amino-acid chain: S-adenosylmethionine:tRNA ribosyltransferase-isomerase (345 aa).

It belongs to the QueA family. Monomer.

The protein localises to the cytoplasm. The enzyme catalyses 7-aminomethyl-7-carbaguanosine(34) in tRNA + S-adenosyl-L-methionine = epoxyqueuosine(34) in tRNA + adenine + L-methionine + 2 H(+). It participates in tRNA modification; tRNA-queuosine biosynthesis. In terms of biological role, transfers and isomerizes the ribose moiety from AdoMet to the 7-aminomethyl group of 7-deazaguanine (preQ1-tRNA) to give epoxyqueuosine (oQ-tRNA). The chain is S-adenosylmethionine:tRNA ribosyltransferase-isomerase from Shewanella baltica (strain OS185).